An 826-amino-acid chain; its full sequence is Protein FAM171B (826 aa).

The N-terminal stretch at 1–32 is a signal peptide; sequence MARLCRRVPCTLLLGLAVVLLKARLVPAAARA. Residues 33–353 are Extracellular-facing; sequence ELSRSDLSLI…DSKDITAYHT (321 aa). The interval 52-71 is disordered; sequence QQQQQKQLEEAEEERTEVPG. Residues Asn-108, Asn-113, Asn-213, and Asn-268 are each glycosylated (N-linked (GlcNAc...) asparagine). Residues 354–374 form a helical membrane-spanning segment; that stretch reads VFLTAILGGTIVIVIGFFAVL. The Cytoplasmic segment spans residues 375–826; sequence LCYCRDKCGT…REERPLIPIN (452 aa). Disordered regions lie at residues 429-448, 474-493, and 774-826; these read NAKN…AETE, QNNY…GSKQ, and HPGE…IPIN. Positions 438–448 are enriched in basic and acidic residues; it reads QKKEPSKAETE. A compositionally biased stretch (polar residues) spans 474–486; the sequence is QNNYSRNPTQSLE. Positions 774–786 are enriched in basic and acidic residues; it reads HPGEESPGRKSTV. Ser-794 is subject to Phosphoserine. Basic and acidic residues predominate over residues 805–826; it reads AKRDSKTNIWKKREERPLIPIN.

Belongs to the FAM171 family.

It is found in the cytoplasmic granule. It localises to the membrane. The sequence is that of Protein FAM171B (FAM171B) from Homo sapiens (Human).